Reading from the N-terminus, the 181-residue chain is Salmonella anti-inflammatory response activator (181 aa).

Residues 4–24 (FVYIYILVIYGSYLWFSLGGN) form a helical membrane-spanning segment.

In terms of assembly, interacts with host (human) STAT3.

Its subcellular location is the membrane. It is found in the host cytoplasm. Functionally, a Salmonella strain-specific effector that induces a host STAT3-dependent anti-inflammatory pathway. In bacteria-infected host cells (human) leads to phosphorylation of host STAT3, at least on 'Tyr-705' and interleukin-10 (IL-10, IL10) production; expressing the gene alone in host cells induces STAT3 phosphorylation and IL-10 production. IL-10 production requires STAT3 in infected cells. Contributes to virulence in mouse infection models. Encoded in only a few S.typhimurium serovars, it may be a specific effector for adaptation to bovine hosts. This Salmonella typhimurium (strain 14028s / SGSC 2262) protein is Salmonella anti-inflammatory response activator.